Here is a 361-residue protein sequence, read N- to C-terminus: Chorismate synthase (361 aa).

NADP(+) is bound by residues Arg-48 and Arg-54. Residues Arg-125–Ser-127, Asn-238–Ala-239, Gly-278, Lys-293–Ser-297, and Arg-319 each bind FMN.

Belongs to the chorismate synthase family. In terms of assembly, homotetramer. It depends on FMNH2 as a cofactor.

The enzyme catalyses 5-O-(1-carboxyvinyl)-3-phosphoshikimate = chorismate + phosphate. It functions in the pathway metabolic intermediate biosynthesis; chorismate biosynthesis; chorismate from D-erythrose 4-phosphate and phosphoenolpyruvate: step 7/7. Its function is as follows. Catalyzes the anti-1,4-elimination of the C-3 phosphate and the C-6 proR hydrogen from 5-enolpyruvylshikimate-3-phosphate (EPSP) to yield chorismate, which is the branch point compound that serves as the starting substrate for the three terminal pathways of aromatic amino acid biosynthesis. This reaction introduces a second double bond into the aromatic ring system. The polypeptide is Chorismate synthase (Vibrio campbellii (strain ATCC BAA-1116)).